We begin with the raw amino-acid sequence, 184 residues long: Probable cobalt-precorrin-6B C(15)-methyltransferase (decarboxylating) (184 aa).

Residues Thr-12, 36 to 40 (GCGTG), Asp-59, and Ala-87 each bind S-adenosyl-L-methionine.

It belongs to the methyltransferase superfamily. Archaeal-type CbiT family.

It catalyses the reaction Co-precorrin-6B + S-adenosyl-L-methionine = Co-precorrin-7 + S-adenosyl-L-homocysteine + CO2. It participates in cofactor biosynthesis; adenosylcobalamin biosynthesis; cob(II)yrinate a,c-diamide from sirohydrochlorin (anaerobic route): step 8/10. Catalyzes the methylation of C-15 in cobalt-precorrin-6B followed by the decarboxylation of C-12 to form cobalt-precorrin-7. This chain is Probable cobalt-precorrin-6B C(15)-methyltransferase (decarboxylating), found in Methanosarcina mazei (strain ATCC BAA-159 / DSM 3647 / Goe1 / Go1 / JCM 11833 / OCM 88) (Methanosarcina frisia).